A 1620-amino-acid chain; its full sequence is Myb-like protein X (1620 aa).

The span at 1–13 (MSTIGNNASSIGN) shows a compositional bias: polar residues. 4 disordered regions span residues 1–57 (MSTI…TTTT), 176–204 (TGSG…SNIG), 294–318 (FFQD…NMTE), and 450–849 (KEEK…TKSA). Positions 28 to 57 (PPTTTTTTTTTTTTTTTTPTTTTPTTTTTT) are enriched in low complexity. The span at 177-187 (GSGGIGGGGSG) shows a compositional bias: gly residues. The SWIRM domain occupies 310-421 (GSGSNNMTEI…CFVNSGDYMN (112 aa)). A compositionally biased stretch (basic and acidic residues) spans 450–497 (KEEKERLEREEKERLEREEKQEKEEKERLEKEEKERLEREEKQEKEEK). Positions 498–511 (EEKEEKEENEEKEE) are enriched in acidic residues. Residues 512–568 (KEEKEKEEKEEKEKQEKEDDKEKQENENEQEKIEKKENKNDSQNKEIKENHDKKDET) are compositionally biased toward basic and acidic residues. Residues 570–598 (DSNNTTTTTTTTTTTSTNTLVAESSSSSS) show a composition bias toward low complexity. Basic and acidic residues predominate over residues 606–628 (KEMKEQPVQENKDKEMMETDTTK). The segment covering 629-645 (ENNGVETTETTNQTTDS) has biased composition (low complexity). The span at 647-798 (ETDKEMKDQP…EIKKDKLKEN (152 aa)) shows a compositional bias: basic and acidic residues. Residues 799 to 834 (EEVEGEIEGENDEGEVVEEDEDEEMEIEEDEEDEED) show a composition bias toward acidic residues. In terms of domain architecture, SANT spans 925 to 977 (PEEFGWTDIETLLLLEGIEIFRDNWQEISDYIGGSKTPEQCLTHFIRLPIEDE). Residues 1049–1506 (QPSKEELERI…DDDEDVEMET (458 aa)) are disordered. Composition is skewed to basic and acidic residues over residues 1051-1195 (SKEE…DKSD), 1219-1255 (ETVE…KDDN), and 1264-1302 (HNKE…EKDL). Residues 1303–1325 (NNLSESQSSNDQSKSNEQMSSDN) show a composition bias toward low complexity. Over residues 1338–1350 (TQITSKEQNITTD) the composition is skewed to polar residues. Low complexity-rich tracts occupy residues 1358–1382 (TPTT…TTNT) and 1390–1416 (NETN…ESNN). Acidic residues-rich tracts occupy residues 1467–1481 (EENE…ENDL) and 1493–1504 (VGEEDDDEDVEM).

It is found in the nucleus. The protein is Myb-like protein X (mybX) of Dictyostelium discoideum (Social amoeba).